The primary structure comprises 147 residues: MPSLLLINGPNLNLLGTREPHLYGATTLRDVEEMSRVQANNYGIDLETFQSNHEGHIIDRIHSARGHIDVIIINPGALTHTSVGLRDALVGVSIPFIEVHITNVHAREPFRHHSYLSDKASAILVGLGTYGYEAAIQHAAKNMIRKN.

Tyr23 (proton acceptor) is an active-site residue. Residues Asn74, His80, and Asp87 each coordinate substrate. His100 serves as the catalytic Proton donor. Substrate contacts are provided by residues 101 to 102 (IT) and Arg111.

The protein belongs to the type-II 3-dehydroquinase family. Homododecamer. Adopts a ring-like structure, composed of an arrangement of two hexameric rings stacked on top of one another.

The enzyme catalyses 3-dehydroquinate = 3-dehydroshikimate + H2O. It functions in the pathway aromatic compound metabolism; 3,4-dihydroxybenzoate biosynthesis; 3,4-dihydroxybenzoate from 3-dehydroquinate: step 1/2. Its function is as follows. Is involved in the catabolism of quinate. Allows the utilization of quinate as carbon source via the beta-ketoadipate pathway. This chain is Catabolic 3-dehydroquinase 2, found in Aspergillus terreus (strain NIH 2624 / FGSC A1156).